We begin with the raw amino-acid sequence, 824 residues long: MSMSHLYGKDEDSDGVEMENFEITDWDLQNEFNPNRRKHFQTKEEATYGMWAEHDSDDERPSFGGKRSRDYSAPVNFISAGIRKPAAEEKSDSDSDSETQSRRENFPKDFEAKKLRTGGNFKPSQRTFAGGIKSNTDFGSWERHTKGIGQKLLQKMGYMPGRGLGKNAQGIIAPIEAKQRRGKGAVGAYGSERTKQSIKDFPVVDSEEEEEKDFQKEMSQWRKEPGGGKKKPKYSYKTVEELKAKGRVGKSLSAPQKEISQVKVIDMTGREQKVYYSYSQLAQKHNIPGEAPGQGVKEEKPQGFALPELEHNLQLLIDMTEQEIIQNDRQLQYEQDMVVNLTHELEKLSEVLEREDKAIENLSKVLETVEECERRIQPTCDNPLTLEECARIFEMLQDKYYEEYKMSEKADLSVAIVYPLMKDYFKDWNPLRDPNYGTDVMSKWKNLLEEGHLSHSAHDAAMDPYHRLLWEMWVPFLRNIIAQWQPRNCAPMADFLDSWVHLLPVWILDNILDQLIFPKLQKEVENWNPLTDTVPIHSWIHPWLPMMQSRLEPLFSPIRNKLSNALQKWHPSDSSAKLILQPWKEVFTPGSWEAFMVKNIVPKLGMCLSEFVINPHQQHMEVFHWVTDWEGMVALSSIVGLLEKHFFPKWLQVLCSWLSNNPNYEEITKWYLGWKSMFSDLVLAHPAIKDKFNEALDIMNRAVSSSVGAYMQPGARESIAYLTQTEKRKDFQYEAMQERRDAESIAQRGIGAAAAVPMNFKDLIQSKAEEHNIVFMPLIGKRHEGKQLYNFNRIVIYIDRGVVFVQGEKTWVPTSLQSLIDMAK.

The tract at residues 1–135 (MSMSHLYGKD…RTFAGGIKSN (135 aa)) is disordered. Residues 11-25 (EDSDGVEMENFEITD) are compositionally biased toward acidic residues. Composition is skewed to basic and acidic residues over residues 41 to 61 (QTKE…DERP) and 85 to 114 (PAAE…EAKK). Residues 122–135 (KPSQRTFAGGIKSN) are compositionally biased toward polar residues. A G-patch domain is found at 145-191 (TKGIGQKLLQKMGYMPGRGLGKNAQGIIAPIEAKQRRGKGAVGAYGS).

Belongs to the TFP11/STIP family. Identified in the spliceosome C complex.

It localises to the nucleus. Functionally, involved in pre-mRNA splicing, specifically in spliceosome disassembly during late-stage splicing events. In Xenopus laevis (African clawed frog), this protein is Tuftelin-interacting protein 11 (tfip11).